Reading from the N-terminus, the 473-residue chain is Ribulose bisphosphate carboxylase large chain 2 (473 aa).

Residues Asn116 and Thr166 each coordinate substrate. Catalysis depends on Lys168, which acts as the Proton acceptor. Lys170 contacts substrate. Mg(2+) is bound by residues Lys194, Asp196, and Glu197. Lys194 is subject to N6-carboxylysine. Residue His287 is the Proton acceptor of the active site. Arg288, His320, and Ser372 together coordinate substrate.

It belongs to the RuBisCO large chain family. Type I subfamily. In terms of assembly, heterohexadecamer of 8 large chains and 8 small chains. Mg(2+) serves as cofactor.

It catalyses the reaction 2 (2R)-3-phosphoglycerate + 2 H(+) = D-ribulose 1,5-bisphosphate + CO2 + H2O. The catalysed reaction is D-ribulose 1,5-bisphosphate + O2 = 2-phosphoglycolate + (2R)-3-phosphoglycerate + 2 H(+). Its function is as follows. RuBisCO catalyzes two reactions: the carboxylation of D-ribulose 1,5-bisphosphate, the primary event in carbon dioxide fixation, as well as the oxidative fragmentation of the pentose substrate. Both reactions occur simultaneously and in competition at the same active site. The chain is Ribulose bisphosphate carboxylase large chain 2 from Acidithiobacillus ferrooxidans (strain ATCC 23270 / DSM 14882 / CIP 104768 / NCIMB 8455) (Ferrobacillus ferrooxidans (strain ATCC 23270)).